The chain runs to 387 residues: GTPase Obg (387 aa).

The 159-residue stretch at 1–159 folds into the Obg domain; that stretch reads MKFVDEAVIR…RSLRLELMLL (159 aa). Residues 160 to 333 form the OBG-type G domain; it reads ADVGLLGMPN…LALKLMDFID (174 aa). GTP is bound by residues 166-173, 191-195, 213-216, 283-286, and 314-316; these read GMPNAGKS, FTTLV, DIPG, NKTD, and SAY. Serine 173 and threonine 193 together coordinate Mg(2+).

This sequence belongs to the TRAFAC class OBG-HflX-like GTPase superfamily. OBG GTPase family. In terms of assembly, monomer. It depends on Mg(2+) as a cofactor.

Its subcellular location is the cytoplasm. Its function is as follows. An essential GTPase which binds GTP, GDP and possibly (p)ppGpp with moderate affinity, with high nucleotide exchange rates and a fairly low GTP hydrolysis rate. Plays a role in control of the cell cycle, stress response, ribosome biogenesis and in those bacteria that undergo differentiation, in morphogenesis control. The sequence is that of GTPase Obg from Shewanella loihica (strain ATCC BAA-1088 / PV-4).